The chain runs to 495 residues: Siroheme synthase 2 (495 aa).

Residues 1 to 205 are precorrin-2 dehydrogenase /sirohydrochlorin ferrochelatase; the sequence is MDHYPIFLNL…GREREAEQAM (205 aa). Residues 22–23 and 43–44 each bind NAD(+); these read ET and PD. A Phosphoserine modification is found at Ser-130. Positions 220-495 are uroporphyrinogen-III C-methyltransferase; that stretch reads GEVYLVGAGP…HPAPADTEQA (276 aa). Pro-229 contacts S-adenosyl-L-methionine. Asp-252 (proton acceptor) is an active-site residue. The active-site Proton donor is Lys-274. S-adenosyl-L-methionine contacts are provided by residues 305-307, Ile-310, 335-336, Met-387, and Ala-416; these read GGD and TA. Positions 471 to 495 are disordered; it reads FPEHGCLRGEPRPTRHPAPADTEQA.

It in the N-terminal section; belongs to the precorrin-2 dehydrogenase / sirohydrochlorin ferrochelatase family. In the C-terminal section; belongs to the precorrin methyltransferase family.

It catalyses the reaction uroporphyrinogen III + 2 S-adenosyl-L-methionine = precorrin-2 + 2 S-adenosyl-L-homocysteine + H(+). It carries out the reaction precorrin-2 + NAD(+) = sirohydrochlorin + NADH + 2 H(+). The enzyme catalyses siroheme + 2 H(+) = sirohydrochlorin + Fe(2+). The protein operates within cofactor biosynthesis; adenosylcobalamin biosynthesis; precorrin-2 from uroporphyrinogen III: step 1/1. It functions in the pathway cofactor biosynthesis; adenosylcobalamin biosynthesis; sirohydrochlorin from precorrin-2: step 1/1. It participates in porphyrin-containing compound metabolism; siroheme biosynthesis; precorrin-2 from uroporphyrinogen III: step 1/1. Its pathway is porphyrin-containing compound metabolism; siroheme biosynthesis; siroheme from sirohydrochlorin: step 1/1. The protein operates within porphyrin-containing compound metabolism; siroheme biosynthesis; sirohydrochlorin from precorrin-2: step 1/1. Functionally, multifunctional enzyme that catalyzes the SAM-dependent methylations of uroporphyrinogen III at position C-2 and C-7 to form precorrin-2 via precorrin-1. Then it catalyzes the NAD-dependent ring dehydrogenation of precorrin-2 to yield sirohydrochlorin. Finally, it catalyzes the ferrochelation of sirohydrochlorin to yield siroheme. The protein is Siroheme synthase 2 of Halorhodospira halophila (strain DSM 244 / SL1) (Ectothiorhodospira halophila (strain DSM 244 / SL1)).